Reading from the N-terminus, the 219-residue chain is Phosphatidylserine decarboxylase proenzyme (219 aa).

The active-site Schiff-base intermediate with substrate; via pyruvic acid is the S188. Pyruvic acid (Ser); by autocatalysis is present on S188.

It belongs to the phosphatidylserine decarboxylase family. PSD-A subfamily. In terms of assembly, heterodimer of a large membrane-associated beta subunit and a small pyruvoyl-containing alpha subunit. Pyruvate serves as cofactor. In terms of processing, is synthesized initially as an inactive proenzyme. Formation of the active enzyme involves a self-maturation process in which the active site pyruvoyl group is generated from an internal serine residue via an autocatalytic post-translational modification. Two non-identical subunits are generated from the proenzyme in this reaction, and the pyruvate is formed at the N-terminus of the alpha chain, which is derived from the carboxyl end of the proenzyme. The post-translation cleavage follows an unusual pathway, termed non-hydrolytic serinolysis, in which the side chain hydroxyl group of the serine supplies its oxygen atom to form the C-terminus of the beta chain, while the remainder of the serine residue undergoes an oxidative deamination to produce ammonia and the pyruvoyl prosthetic group on the alpha chain.

The protein localises to the cell membrane. It carries out the reaction a 1,2-diacyl-sn-glycero-3-phospho-L-serine + H(+) = a 1,2-diacyl-sn-glycero-3-phosphoethanolamine + CO2. It participates in phospholipid metabolism; phosphatidylethanolamine biosynthesis; phosphatidylethanolamine from CDP-diacylglycerol: step 2/2. In terms of biological role, catalyzes the formation of phosphatidylethanolamine (PtdEtn) from phosphatidylserine (PtdSer). In Citrifermentans bemidjiense (strain ATCC BAA-1014 / DSM 16622 / JCM 12645 / Bem) (Geobacter bemidjiensis), this protein is Phosphatidylserine decarboxylase proenzyme.